The chain runs to 441 residues: Protein C-ets-1 (441 aa).

N6-acetyllysine; alternate occurs at positions 8 and 15. Residues lysine 8 and lysine 15 each participate in a glycyl lysine isopeptide (Lys-Gly) (interchain with G-Cter in SUMO2); alternate cross-link. Residue lysine 15 forms a Glycyl lysine isopeptide (Lys-Gly) (interchain with G-Cter in SUMO); alternate linkage. A Phosphothreonine; by MAPK modification is found at threonine 38. In terms of domain architecture, PNT spans 51–136; sequence ATFSGFTKEQ…EHLEILQKED (86 aa). The activation domain; required for transcription activation stretch occupies residues 130-243; the sequence is EILQKEDVKP…DNMCMGRASR (114 aa). A Glycyl lysine isopeptide (Lys-Gly) (interchain with G-Cter in SUMO2) cross-link involves residue lysine 138. The residue at position 223 (tyrosine 223) is a Phosphotyrosine. Residue lysine 227 forms a Glycyl lysine isopeptide (Lys-Gly) (interchain with G-Cter in SUMO) linkage. Serine 251 and serine 254 each carry phosphoserine. A Phosphothreonine modification is found at threonine 265. Serine 267, serine 270, serine 282, and serine 285 each carry phosphoserine. Residues 304–312 are helix HI-1; sequence FKDYVRDRA. An N6-acetyllysine modification is found at lysine 305. A helix HI-2 region spans residues 323–330; sequence AAALAGYT. Residues 335-415 constitute a DNA-binding region (ETS); the sequence is IQLWQFLLEL…AGKRYVYRFV (81 aa). Residues 418 to 422 are helix H4; the sequence is LQSLL. Residues 426–432 are helix H5; the sequence is PEELHAM.

It belongs to the ETS family. As to quaternary structure, binds DNA as a homodimer; homodimerization is required for transcription activation. Interacts with MAF and MAFB. Interacts with PAX5; the interaction alters DNA-binding properties. Interacts with DAXX. Interacts with UBE2I. Interacts with SP100; the interaction is direct and modulates ETS1 transcriptional activity. Sumoylated on Lys-15 and Lys-227, preferentially with SUMO2; which inhibits transcriptional activity. Post-translationally, ubiquitinated; which induces proteasomal degradation. In terms of processing, phosphorylation at Ser-251, Ser-282 and Ser-285 by CaMK2/CaMKII in response to calcium signaling decreases affinity for DNA: an increasing number of phosphoserines causes DNA-binding to become progressively weaker.

The protein localises to the nucleus. Its subcellular location is the cytoplasm. With respect to regulation, autoinhibited by a module composed of four alpha helices (HI-1, HI-2, H4, and H5) that flank the DNA-binding ETS domain, reducing the affinity for DNA. Phosphorylation by CaMK2/CaMKII in response to calcium signaling decreases affinity for DNA. In terms of biological role, transcription factor. Directly controls the expression of cytokine and chemokine genes in a wide variety of different cellular contexts. May control the differentiation, survival and proliferation of lymphoid cells. May also regulate angiogenesis through regulation of expression of genes controlling endothelial cell migration and invasion. In Rattus norvegicus (Rat), this protein is Protein C-ets-1 (Ets1).